The following is a 440-amino-acid chain: Glutamyl-tRNA reductase (440 aa).

Substrate contacts are provided by residues 55-58, Ser-115, 120-122, and Gln-126; these read TCNR and ETQ. The active-site Nucleophile is Cys-56. 199 to 204 contributes to the NADP(+) binding site; that stretch reads GSGEMG.

Belongs to the glutamyl-tRNA reductase family. In terms of assembly, homodimer.

It carries out the reaction (S)-4-amino-5-oxopentanoate + tRNA(Glu) + NADP(+) = L-glutamyl-tRNA(Glu) + NADPH + H(+). It participates in porphyrin-containing compound metabolism; protoporphyrin-IX biosynthesis; 5-aminolevulinate from L-glutamyl-tRNA(Glu): step 1/2. Catalyzes the NADPH-dependent reduction of glutamyl-tRNA(Glu) to glutamate 1-semialdehyde (GSA). The protein is Glutamyl-tRNA reductase of Helicobacter hepaticus (strain ATCC 51449 / 3B1).